We begin with the raw amino-acid sequence, 567 residues long: Phosphoglucomutase-like protein 5 (567 aa).

Positions 1-26 (MEGSPIPVLTVPTAPYEDQRPTGGGG) are disordered. Residue Thr-120 is modified to Phosphothreonine. Residue Ser-122 is modified to Phosphoserine.

The protein belongs to the phosphohexose mutase family. As to quaternary structure, interacts with DMD/dystrophin; the interaction is direct. Interacts with UTRN/utrophin.

The protein localises to the cell junction. Its subcellular location is the adherens junction. It is found in the cytoplasm. It localises to the cytoskeleton. The protein resides in the cell membrane. The protein localises to the sarcolemma. Functionally, component of adherens-type cell-cell and cell-matrix junctions. Has no phosphoglucomutase activity in vitro. This is Phosphoglucomutase-like protein 5 from Rattus norvegicus (Rat).